A 336-amino-acid polypeptide reads, in one-letter code: Structure-specific endonuclease subunit SLX1 (336 aa).

The 84-residue stretch at 21–104 folds into the GIY-YIG domain; that stretch reads SFYGVYLLQS…QHCHETRHIK (84 aa). Residues 37-57 form a disordered region; sequence FYIGSTPDPPRRLRQHNGDLK. An SLX1-type zinc finger spans residues 214 to 290; sequence CALCLEPIEQ…PATVNRCCSC (77 aa).

It belongs to the SLX1 family. Forms a heterodimer with SLX4. The cofactor is a divalent metal cation.

It localises to the nucleus. Catalytic subunit of the SLX1-SLX4 structure-specific endonuclease that resolves DNA secondary structures generated during DNA repair and recombination. Has endonuclease activity towards branched DNA substrates, introducing single-strand cuts in duplex DNA close to junctions with ss-DNA. The chain is Structure-specific endonuclease subunit SLX1 from Scheffersomyces stipitis (strain ATCC 58785 / CBS 6054 / NBRC 10063 / NRRL Y-11545) (Yeast).